Consider the following 145-residue polypeptide: Ubiquitin-conjugating enzyme E2 variant 1C (145 aa).

The 134-residue stretch at 12–145 (PRNFRLLEEL…LVQPPEGTFF (134 aa)) folds into the UBC core domain.

Belongs to the ubiquitin-conjugating enzyme family. As to quaternary structure, heterodimer with UBC35 or UBC36. In terms of tissue distribution, expressed in roots, shoots, leaves, stems and flowers, but not in pollen.

In terms of biological role, has no ubiquitin ligase activity on its own. The heterodimer with UBC catalyzes the synthesis of non-canonical poly-ubiquitin chains that are linked through 'Lys-63'. This type of poly-ubiquitination does not lead to protein degradation by the proteasome. Mediates transcriptional activation of target genes. May play a role in the control of progress through the cell cycle and differentiation. May play a role in the error-free DNA repair pathway and contributes to the survival of cells after DNA damage. In Arabidopsis thaliana (Mouse-ear cress), this protein is Ubiquitin-conjugating enzyme E2 variant 1C (UEV1C).